The following is a 610-amino-acid chain: tRNA uridine 5-carboxymethylaminomethyl modification enzyme MnmG (610 aa).

FAD is bound at residue 14–19; it reads GAGHAG. 274–288 contributes to the NAD(+) binding site; the sequence is GPRYCPSIEDKIVKF.

The protein belongs to the MnmG family. Homodimer. Heterotetramer of two MnmE and two MnmG subunits. Requires FAD as cofactor.

It localises to the cytoplasm. NAD-binding protein involved in the addition of a carboxymethylaminomethyl (cmnm) group at the wobble position (U34) of certain tRNAs, forming tRNA-cmnm(5)s(2)U34. In Chlamydia trachomatis serovar D (strain ATCC VR-885 / DSM 19411 / UW-3/Cx), this protein is tRNA uridine 5-carboxymethylaminomethyl modification enzyme MnmG.